The chain runs to 95 residues: DNA/RNA-binding protein Alba (95 aa).

Residue K13 is modified to N6-acetyllysine.

Belongs to the histone-like Alba family. Post-translationally, acetylated. Acetylation at Lys-13 decreases DNA-binding affinity.

Its subcellular location is the cytoplasm. The protein localises to the chromosome. Binds double-stranded DNA tightly but without sequence specificity. Involved in DNA compaction. The sequence is that of DNA/RNA-binding protein Alba from Nitrosopumilus maritimus (strain SCM1).